The following is a 305-amino-acid chain: MSKKLTFQEIILTLQQYWNDQGCMLMQAYDNEKGAGTMSPYTFLRAIGPEPWNAAYVEPSRRPADGRYGENPNRLYQHHQFQVVMKPSPSNIQELYLASLEKLGINPLEHDIRFVEDNWENPSTGSAGLGWEVWLDGMEITQFTYFQQVGGLATSPVTAEVTYGLERLASYIQEVDSVYDIEWAPGVKYGEIFLQPEYEHSKYSFEMSDQDMLLENFEKFEKEASRALEEGLVHPAYDYVLKCSHTFNLLDARGAVSVTERTGYIARIRNLARVVAKTFVAERKKLGFPLLDEATRAILLAEDDE.

The protein belongs to the class-II aminoacyl-tRNA synthetase family. As to quaternary structure, tetramer of two alpha and two beta subunits.

The protein localises to the cytoplasm. The catalysed reaction is tRNA(Gly) + glycine + ATP = glycyl-tRNA(Gly) + AMP + diphosphate. The sequence is that of Glycine--tRNA ligase alpha subunit from Streptococcus pyogenes serotype M18 (strain MGAS8232).